Consider the following 440-residue polypeptide: 5-methylthioadenosine/S-adenosylhomocysteine deaminase (440 aa).

Residues His69 and His71 each contribute to the Zn(2+) site. Residues Glu98 and His190 each coordinate substrate. His217 is a binding site for Zn(2+). Positions 220 and 305 each coordinate substrate. Asp305 contacts Zn(2+).

The protein belongs to the metallo-dependent hydrolases superfamily. MTA/SAH deaminase family. It depends on Zn(2+) as a cofactor.

It catalyses the reaction S-adenosyl-L-homocysteine + H2O + H(+) = S-inosyl-L-homocysteine + NH4(+). It carries out the reaction S-methyl-5'-thioadenosine + H2O + H(+) = S-methyl-5'-thioinosine + NH4(+). Catalyzes the deamination of 5-methylthioadenosine and S-adenosyl-L-homocysteine into 5-methylthioinosine and S-inosyl-L-homocysteine, respectively. Is also able to deaminate adenosine. This chain is 5-methylthioadenosine/S-adenosylhomocysteine deaminase, found in Desulfovibrio desulfuricans (strain ATCC 27774 / DSM 6949 / MB).